A 674-amino-acid chain; its full sequence is Probable copper-transporting P-type ATPase B (674 aa).

A disordered region spans residues 1–22 (MNHSNQMHHDNHESHNHHSGHA). The segment covering 7 to 16 (MHHDNHESHN) has biased composition (basic and acidic residues). Transmembrane regions (helical) follow at residues 32–52 (FFVSLIFAIPIILLSPLMGIN), 57–77 (FTFPGSEWVVLILSTILFFYG), 95–115 (GMMTLVALGISVAYIYSLYAF), 127–147 (TMDFFWELATLILIMLLGHWI), 284–304 (GYLFYFAVIVGVISFIVWMLI), and 315–335 (LVTVLVIACPHALGLAIPLVT). The 4-aspartylphosphate intermediate role is filled by D367. Residues D565 and D569 each contribute to the Mg(2+) site. 2 helical membrane-spanning segments follow: residues 623 to 645 (LWWGAGYNIVAVPLAAGALAFVG) and 649 to 671 (SPAVGAILMSLSTVIVAINAFTL).

This sequence belongs to the cation transport ATPase (P-type) (TC 3.A.3) family. Type IB subfamily.

It localises to the cell membrane. The enzyme catalyses Cu(+)(in) + ATP + H2O = Cu(+)(out) + ADP + phosphate + H(+). Involved in copper transport. The sequence is that of Probable copper-transporting P-type ATPase B (copB) from Staphylococcus epidermidis (strain ATCC 12228 / FDA PCI 1200).